Consider the following 293-residue polypeptide: N-acetylneuraminate lyase (293 aa).

Aceneuramate is bound by residues Ser-47 and Thr-48. Tyr-136 acts as the Proton donor in catalysis. The Schiff-base intermediate with substrate role is filled by Lys-164. Residues Thr-166, Gly-188, Asp-190, Glu-191, and Ser-207 each coordinate aceneuramate.

Belongs to the DapA family. NanA subfamily. Homotetramer.

The protein resides in the cytoplasm. It carries out the reaction aceneuramate = aldehydo-N-acetyl-D-mannosamine + pyruvate. The protein operates within amino-sugar metabolism; N-acetylneuraminate degradation; D-fructose 6-phosphate from N-acetylneuraminate: step 1/5. Catalyzes the reversible aldol cleavage of N-acetylneuraminic acid (sialic acid; Neu5Ac) to form pyruvate and N-acetylmannosamine (ManNAc) via a Schiff base intermediate. The protein is N-acetylneuraminate lyase of Haemophilus influenzae (strain ATCC 51907 / DSM 11121 / KW20 / Rd).